We begin with the raw amino-acid sequence, 184 residues long: PXMP2/4 family protein 3 (184 aa).

A signal peptide spans 1–44; sequence MSNSKPLSLTDAVTTWYMKKLKSKPIQTKALTSATLSFISSVVA. Transmembrane regions (helical) follow at residues 58–78, 97–117, and 159–179; these read VVKF…WHII, IVDQ…VLAI, and LRVL…SILA.

It belongs to the peroxisomal membrane protein PXMP2/4 family.

The protein resides in the membrane. This chain is PXMP2/4 family protein 3, found in Dictyostelium discoideum (Social amoeba).